Reading from the N-terminus, the 451-residue chain is CBL-interacting protein kinase 10 (451 aa).

Residues 13–267 enclose the Protein kinase domain; the sequence is YEIGKLLGQG…VSEIMEDPWF (255 aa). ATP contacts are provided by residues 19 to 27 and Lys-42; that span reads LGQGSFAKV. The active-site Proton acceptor is Asp-135. Residues 153-182 form an activation loop region; that stretch reads DFGLSALAECKRQDGLLHTTCGTPAYVAPE. The 33-residue stretch at 304–336 folds into the NAF domain; sequence INEGKQEAENLTSLNAFDIISLSSGFDLSAMFE. A PPI region spans residues 341–370; that stretch reads KEESKFTSTNTATTITKKLEDVAKNLRLKF.

Belongs to the protein kinase superfamily. CAMK Ser/Thr protein kinase family. SNF1 subfamily. It depends on Mn(2+) as a cofactor.

The enzyme catalyses L-seryl-[protein] + ATP = O-phospho-L-seryl-[protein] + ADP + H(+). It catalyses the reaction L-threonyl-[protein] + ATP = O-phospho-L-threonyl-[protein] + ADP + H(+). CIPK serine-threonine protein kinases interact with CBL proteins. Binding of a CBL protein to the regulatory NAF domain of CIPK protein lead to the activation of the kinase in a calcium-dependent manner. This Oryza sativa subsp. japonica (Rice) protein is CBL-interacting protein kinase 10 (CIPK10).